Consider the following 691-residue polypeptide: Serotransferrin-2 (691 aa).

The first 18 residues, 1–18, serve as a signal peptide directing secretion; it reads MKLLLLSALLGCLATAYA. Transferrin-like domains follow at residues 25 to 329 and 340 to 670; these read VKWC…SLKK and IKWC…SLRK. A disulfide bridge connects residues Cys28 and Cys50. Positions 74 and 104 each coordinate Fe(3+). Cystine bridges form between Cys127-Cys207, Cys172-Cys186, and Cys235-Cys249. Residues Thr129, Ser134, Gly136, and Trp137 each contribute to the hydrogencarbonate site. A glycan (N-linked (GlcNAc...) asparagine) is linked at Asn169. Tyr201 serves as a coordination point for Fe(3+). His257 provides a ligand contact to Fe(3+). 2 disulfides stabilise this stretch: Cys343–Cys379 and Cys353–Cys370. Asp394 and Tyr428 together coordinate Fe(3+). Intrachain disulfides connect Cys404–Cys682, Cys419–Cys643, Cys451–Cys530, Cys475–Cys671, Cys485–Cys499, Cys496–Cys513, and Cys570–Cys584. Residues Thr453, Arg457, Ala459, and Gly460 each contribute to the hydrogencarbonate site. Tyr524 lines the Fe(3+) pocket. Position 592 (His592) interacts with Fe(3+).

It belongs to the transferrin family. As to quaternary structure, monomer. As to expression, abundant in liver and serum with smaller amounts found in the stomach and kidney.

It localises to the secreted. In terms of biological role, transferrins are iron binding transport proteins which can bind two Fe(3+) ions in association with the binding of an anion, usually bicarbonate. It is responsible for the transport of iron from sites of absorption and heme degradation to those of storage and utilization. Serum transferrin may also have a further role in stimulating cell proliferation. This Salmo salar (Atlantic salmon) protein is Serotransferrin-2 (tf2).